The sequence spans 554 residues: Dihydroxy-acid dehydratase (554 aa).

Cys51 is a [2Fe-2S] cluster binding site. Mg(2+) is bound at residue Asp83. Residue Cys124 coordinates [2Fe-2S] cluster. Mg(2+) contacts are provided by Asp125 and Lys126. Lys126 carries the post-translational modification N6-carboxylysine. Cys193 serves as a coordination point for [2Fe-2S] cluster. Glu444 serves as a coordination point for Mg(2+). Catalysis depends on Ser470, which acts as the Proton acceptor.

It belongs to the IlvD/Edd family. Homodimer. [2Fe-2S] cluster is required as a cofactor. The cofactor is Mg(2+).

It carries out the reaction (2R)-2,3-dihydroxy-3-methylbutanoate = 3-methyl-2-oxobutanoate + H2O. The catalysed reaction is (2R,3R)-2,3-dihydroxy-3-methylpentanoate = (S)-3-methyl-2-oxopentanoate + H2O. The protein operates within amino-acid biosynthesis; L-isoleucine biosynthesis; L-isoleucine from 2-oxobutanoate: step 3/4. It functions in the pathway amino-acid biosynthesis; L-valine biosynthesis; L-valine from pyruvate: step 3/4. Functions in the biosynthesis of branched-chain amino acids. Catalyzes the dehydration of (2R,3R)-2,3-dihydroxy-3-methylpentanoate (2,3-dihydroxy-3-methylvalerate) into 2-oxo-3-methylpentanoate (2-oxo-3-methylvalerate) and of (2R)-2,3-dihydroxy-3-methylbutanoate (2,3-dihydroxyisovalerate) into 2-oxo-3-methylbutanoate (2-oxoisovalerate), the penultimate precursor to L-isoleucine and L-valine, respectively. The sequence is that of Dihydroxy-acid dehydratase from Vesicomyosocius okutanii subsp. Calyptogena okutanii (strain HA).